Consider the following 270-residue polypeptide: Tryptophan synthase alpha chain (270 aa).

Residues Glu49 and Asp60 each act as proton acceptor in the active site.

Belongs to the TrpA family. In terms of assembly, tetramer of two alpha and two beta chains.

It carries out the reaction (1S,2R)-1-C-(indol-3-yl)glycerol 3-phosphate + L-serine = D-glyceraldehyde 3-phosphate + L-tryptophan + H2O. It functions in the pathway amino-acid biosynthesis; L-tryptophan biosynthesis; L-tryptophan from chorismate: step 5/5. The alpha subunit is responsible for the aldol cleavage of indoleglycerol phosphate to indole and glyceraldehyde 3-phosphate. This chain is Tryptophan synthase alpha chain, found in Gluconobacter oxydans (strain 621H) (Gluconobacter suboxydans).